The following is a 1052-amino-acid chain: Lateral signaling target protein 2 homolog (1052 aa).

Disordered stretches follow at residues 311-348 (YSSI…TSPH), 379-455 (PSML…DSDS), 506-539 (DEFG…STSA), 551-678 (LRLP…ASSF), and 814-973 (NTID…IPDG). Composition is skewed to low complexity over residues 312 to 346 (SSIE…STTS), 379 to 392 (PSML…TPTA), and 400 to 419 (PSHS…NPPA). Residues 422 to 455 (SEDDDDDDEEREDDEEECGMLDSDEQDLNDDSDS) show a composition bias toward acidic residues. Positions 554-574 (PSSSSENEQTTGSNQQSTIKT) are enriched in polar residues. Residues S555 and S556 each carry the phosphoserine modification. Basic residues-rich tracts occupy residues 588 to 614 (RQRH…HHQQ) and 625 to 644 (SHHH…ARKR). Over residues 652–661 (STTAEQQQTI) the composition is skewed to polar residues. A compositionally biased stretch (low complexity) spans 824-842 (NNNNNNNNNSGSSSSSNSS). Phosphoserine is present on S854. Residues 872-915 (QQQQQQQAQLQLQMQRQRNNSVGSNSPSSSSSSSSSSEHNSPIS) show a composition bias toward low complexity. The segment covering 926–935 (SNSASMPSIG) has biased composition (polar residues). The span at 936 to 963 (STATTAAATAAATATTTTSATTTTTTTT) shows a compositional bias: low complexity. The FYVE-type zinc-finger motif lies at 972–1032 (DGKAPRCMSC…VCRECYVREV (61 aa)). Residues C978, C981, C994, C997, C1002, C1005, C1024, and C1027 each coordinate Zn(2+).

Belongs to the lst-2 family.

In terms of biological role, negative regulator of epidermal growth factor receptor (EGFR) signaling. This Drosophila virilis (Fruit fly) protein is Lateral signaling target protein 2 homolog.